Consider the following 779-residue polypeptide: MVIMSEFSAVPSGTGQGQQKPLRVGFYDVERTLGKGNFAVVKLARHRVTKTQVAIKIIDKTRLDSSNLEKIYREVQLMKLLNHPNIIKLYQVMETKDMLYIVTEFAKNGEMFDYLTSNGHLSENEARQKFWQILSAVEYCHNHHIVHRDLKTENLLLDSNMDIKLADFGFGNFYKPGEPLSTWCGSPPYAAPEVFEGKEYEGPQLDVWSLGVVLYVLVCGSLPFDGPNLPTLRQRVLEGRFRIPFFMSQDCETLIRRMLVVDPAKRITIAQIRQHRWMQADPTLLQQDDPAFDMQGYTSNLGDYNEQVLGIMQALGIDRQRTIESLQNSSYNHFAAIYYLLLERLKEHRSAQPSSRPTPAPTRQPQLRSSDLSSLEVPQEILPCDPFRPSLLCPQPQALAQSVLQAEIDCDLHSSLQPLLFPLDTNCSGVFRHRSISPSSLLDTAISEEARQGPSLEEEQEVQEPLPGSTGRRHTLAEVSTHFSPLNPPCIIVSSSATASPSEGTSSDSCLPFSASEGPAGLGSGLATPGLLGTSSPVRLASPFLGSQSATPVLQTQAGLGTAVLPPVSFQEGRRASDTSLTQGLKAFRQQLRKNARTKGFLGLNKIKGLARQVCQSSVRTPRGGMSTFHTPAPSSGLQGCTTSNREGRSLLEEVLHQQRLLQLQHHSSTAAASSGCQQGPQLSPVPYVLAPCDSLLVSGIPLLPTPLLQAGMSPVASAAHLLDTHLHISAGPVALPTGPLPQCLTRLSPGCDPAGLPQGDCEMEDLTSGQRGTFVLVQ.

The region spanning 27-278 (YDVERTLGKG…IAQIRQHRWM (252 aa)) is the Protein kinase domain. ATP is bound by residues 33 to 41 (LGKGNFAVV) and lysine 56. Aspartate 149 acts as the Proton acceptor in catalysis. Threonine 182 carries the post-translational modification Phosphothreonine; by LKB1 and GSK3-beta. Position 186 is a phosphoserine; by autocatalysis (serine 186). One can recognise a UBA domain in the interval 303–343 (DYNEQVLGIMQALGIDRQRTIESLQNSSYNHFAAIYYLLLE). Residue threonine 322 is modified to Phosphothreonine; by CaMK1. Disordered stretches follow at residues 350-375 (SAQP…LSSL) and 449-472 (EARQ…STGR). Residues 363–373 (RQPQLRSSDLS) show a composition bias toward polar residues. A Phosphoserine; by PKA modification is found at serine 577. The segment at 586-612 (KAFRQQLRKNARTKGFLGLNKIKGLAR) is RK-rich region. Positions 621-641 (TPRGGMSTFHTPAPSSGLQGC) are disordered. The segment covering 628-641 (TFHTPAPSSGLQGC) has biased composition (polar residues).

The protein belongs to the protein kinase superfamily. CAMK Ser/Thr protein kinase family. AMPK subfamily. As to quaternary structure, interacts (when phosphorylated on Thr-182 and Ser-186) with YWHAZ. Interacts with ATP1A1. Requires Mg(2+) as cofactor. Post-translationally, phosphorylated at Thr-182 by STK11/LKB1 in complex with STE20-related adapter-alpha (STRADA) pseudo kinase and CAB39, leading to its activation. Phosphorylation at Thr-182 promotes autophosphorylation at Ser-186, which is required for sustained activity. Autophosphorylation at Ser-186 is maintained by sequential phosphorylation at Thr-182 by GSK3-beta. GSK3-beta cannot initiate phosphorylation at Thr-182, it can only maintain it. Phosphorylation at Ser-577 by PKA promotes translocation to the cytoplasm. Phosphorylation at Thr-322 by CaMK1 following intracellular sodium concentration leads to activation. In terms of tissue distribution, expressed in lung, skin, ovary, heart and stomach. No expression in brain, liver or adult skeletal muscle but is present in skeletal muscle progenitor cells of the somite beginning at 9.5 dpc. Present at 8.0 dpc in the monolayer of presumptive myocardial cells but rapidly down-regulated at 8.5 dpc upon primitive ventricle formation, although still present in myocardial cells that will populate the primitive atrium and bulbus cordis. At 9.5 dpc expression is down-regulated in the primitive atrium but observed in the sinus venosus and truncus arteriosus.

Its subcellular location is the cytoplasm. The protein resides in the nucleus. It carries out the reaction L-seryl-[protein] + ATP = O-phospho-L-seryl-[protein] + ADP + H(+). The catalysed reaction is L-threonyl-[protein] + ATP = O-phospho-L-threonyl-[protein] + ADP + H(+). Activated by phosphorylation on Thr-182. Also activated by phosphorylation on Thr-322 in response to increases in intracellular sodium in parallel with elevations in intracellular calcium through the reversible sodium/calcium exchanger. Its function is as follows. Serine/threonine-protein kinase involved in various processes such as cell cycle regulation, gluconeogenesis and lipogenesis regulation, muscle growth and differentiation and tumor suppression. Phosphorylates HDAC4, HDAC5, PPME1, SREBF1, CRTC1/TORC1 and CRTC2/TORC2. Acts as a tumor suppressor and plays a key role in p53/TP53-dependent anoikis, a type of apoptosis triggered by cell detachment: required for phosphorylation of p53/TP53 in response to loss of adhesion and is able to suppress metastasis. Part of a sodium-sensing signaling network, probably by mediating phosphorylation of PPME1: following increases in intracellular sodium, SIK1 is activated by CaMK1 and phosphorylates PPME1 subunit of protein phosphatase 2A (PP2A), leading to dephosphorylation of sodium/potassium-transporting ATPase ATP1A1 and subsequent increase activity of ATP1A1. Acts as a regulator of muscle cells by phosphorylating and inhibiting class II histone deacetylases HDAC4 and HDAC5, leading to promote expression of MEF2 target genes in myocytes. Also required during cardiomyogenesis by regulating the exit of cardiomyoblasts from the cell cycle via down-regulation of CDKN1C/p57Kip2. Acts as a regulator of hepatic gluconeogenesis by phosphorylating and repressing the CREB-specific coactivators CRTC1/TORC1 and CRTC2/TORC2, leading to inhibit CREB activity. Also regulates hepatic lipogenesis by phosphorylating and inhibiting SREBF1. In concert with CRTC1/TORC1, regulates the light-induced entrainment of the circadian clock by attenuating PER1 induction; represses CREB-mediated transcription of PER1 by phosphorylating and deactivating CRTC1/TORC1. This chain is Serine/threonine-protein kinase SIK1 (Sik1), found in Mus musculus (Mouse).